A 215-amino-acid chain; its full sequence is N-(5'-phosphoribosyl)anthranilate isomerase (215 aa).

This sequence belongs to the TrpF family.

It catalyses the reaction N-(5-phospho-beta-D-ribosyl)anthranilate = 1-(2-carboxyphenylamino)-1-deoxy-D-ribulose 5-phosphate. The protein operates within amino-acid biosynthesis; L-tryptophan biosynthesis; L-tryptophan from chorismate: step 3/5. In Rippkaea orientalis (strain PCC 8801 / RF-1) (Cyanothece sp. (strain PCC 8801)), this protein is N-(5'-phosphoribosyl)anthranilate isomerase.